The sequence spans 157 residues: uncharacterized protein (157 aa).

The N-acetyltransferase domain occupies 9–154 (LLINYKTLDE…ETNLNAVTNE (146 aa)).

This is an uncharacterized protein from Bacillus cereus (strain G9842).